The sequence spans 463 residues: ATP synthase subunit beta (463 aa).

153–160 is a binding site for ATP; sequence GGAGVGKT.

The protein belongs to the ATPase alpha/beta chains family. F-type ATPases have 2 components, CF(1) - the catalytic core - and CF(0) - the membrane proton channel. CF(1) has five subunits: alpha(3), beta(3), gamma(1), delta(1), epsilon(1). CF(0) has three main subunits: a(1), b(2) and c(9-12). The alpha and beta chains form an alternating ring which encloses part of the gamma chain. CF(1) is attached to CF(0) by a central stalk formed by the gamma and epsilon chains, while a peripheral stalk is formed by the delta and b chains.

The protein resides in the cell inner membrane. The catalysed reaction is ATP + H2O + 4 H(+)(in) = ADP + phosphate + 5 H(+)(out). Its function is as follows. Produces ATP from ADP in the presence of a proton gradient across the membrane. The catalytic sites are hosted primarily by the beta subunits. The protein is ATP synthase subunit beta of Burkholderia cepacia (Pseudomonas cepacia).